A 484-amino-acid chain; its full sequence is Protein nucleotidyltransferase YdiU (484 aa).

Residues G81, G83, R84, K103, D115, G116, R166, and R173 each contribute to the ATP site. The active-site Proton acceptor is D244. Mg(2+) contacts are provided by N245 and D254. ATP is bound at residue D254.

Belongs to the SELO family. Mg(2+) serves as cofactor. Mn(2+) is required as a cofactor.

It catalyses the reaction L-seryl-[protein] + ATP = 3-O-(5'-adenylyl)-L-seryl-[protein] + diphosphate. It carries out the reaction L-threonyl-[protein] + ATP = 3-O-(5'-adenylyl)-L-threonyl-[protein] + diphosphate. The enzyme catalyses L-tyrosyl-[protein] + ATP = O-(5'-adenylyl)-L-tyrosyl-[protein] + diphosphate. The catalysed reaction is L-histidyl-[protein] + UTP = N(tele)-(5'-uridylyl)-L-histidyl-[protein] + diphosphate. It catalyses the reaction L-seryl-[protein] + UTP = O-(5'-uridylyl)-L-seryl-[protein] + diphosphate. It carries out the reaction L-tyrosyl-[protein] + UTP = O-(5'-uridylyl)-L-tyrosyl-[protein] + diphosphate. Its function is as follows. Nucleotidyltransferase involved in the post-translational modification of proteins. It can catalyze the addition of adenosine monophosphate (AMP) or uridine monophosphate (UMP) to a protein, resulting in modifications known as AMPylation and UMPylation. In Shewanella baltica (strain OS185), this protein is Protein nucleotidyltransferase YdiU.